The sequence spans 170 residues: Shikimate kinase (170 aa).

11–16 (LSGKST) is a binding site for ATP. A Mg(2+)-binding site is contributed by serine 15. Substrate contacts are provided by aspartate 33, arginine 57, and glycine 79. Arginine 119 provides a ligand contact to ATP. Arginine 137 serves as a coordination point for substrate.

This sequence belongs to the shikimate kinase family. In terms of assembly, monomer. Mg(2+) is required as a cofactor.

Its subcellular location is the cytoplasm. It carries out the reaction shikimate + ATP = 3-phosphoshikimate + ADP + H(+). It functions in the pathway metabolic intermediate biosynthesis; chorismate biosynthesis; chorismate from D-erythrose 4-phosphate and phosphoenolpyruvate: step 5/7. In terms of biological role, catalyzes the specific phosphorylation of the 3-hydroxyl group of shikimic acid using ATP as a cosubstrate. This chain is Shikimate kinase, found in Clostridium botulinum (strain ATCC 19397 / Type A).